A 347-amino-acid polypeptide reads, in one-letter code: 5-formaminoimidazole-4-carboxamide-1-(beta)-D-ribofuranosyl 5'-monophosphate synthetase (347 aa).

His-23 and Ser-91 together coordinate 5-amino-1-(5-phospho-beta-D-ribosyl)imidazole-4-carboxamide. One can recognise an ATP-grasp domain in the interval 112–323; sequence RKILLWESDQ…YSYLYWDEPM (212 aa). Residues 142–196 and Glu-218 contribute to the ATP site; that span reads PDEV…VPAY. Asn-244 is a 5-amino-1-(5-phospho-beta-D-ribosyl)imidazole-4-carboxamide binding site. Mg(2+) contacts are provided by Glu-283 and Glu-296.

This sequence belongs to the phosphohexose mutase family. The cofactor is Mg(2+). Mn(2+) serves as cofactor.

It carries out the reaction 5-amino-1-(5-phospho-beta-D-ribosyl)imidazole-4-carboxamide + formate + ATP = 5-formamido-1-(5-phospho-D-ribosyl)imidazole-4-carboxamide + ADP + phosphate. It functions in the pathway purine metabolism; IMP biosynthesis via de novo pathway; 5-formamido-1-(5-phospho-D-ribosyl)imidazole-4-carboxamide from 5-amino-1-(5-phospho-D-ribosyl)imidazole-4-carboxamide (formate route): step 1/1. Functionally, catalyzes the ATP- and formate-dependent formylation of 5-aminoimidazole-4-carboxamide-1-beta-d-ribofuranosyl 5'-monophosphate (AICAR) to 5-formaminoimidazole-4-carboxamide-1-beta-d-ribofuranosyl 5'-monophosphate (FAICAR) in the absence of folates. The polypeptide is 5-formaminoimidazole-4-carboxamide-1-(beta)-D-ribofuranosyl 5'-monophosphate synthetase (Ignicoccus hospitalis (strain KIN4/I / DSM 18386 / JCM 14125)).